Consider the following 305-residue polypeptide: NK1 transcription factor-related protein 2 (305 aa).

Disordered stretches follow at residues E51–R158 and K210–L257. The span at S87–E96 shows a compositional bias: acidic residues. Positions D97–P115 are enriched in basic and acidic residues. Low complexity predominate over residues A129–G140. Residues P156 to N215 constitute a DNA-binding region (homeobox).

Belongs to the NK-1 homeobox family. Interacts (via the homeodomain) with HIPK1, HIPK2, and HIPK3. Post-translationally, phosphorylated by HIPK2 in vitro. As to expression, expression detected in the brain, testis and spleen. In the testis, expressed in the germ cells of the seminiferous epithelium, predominantly in elongating spermatids and spermatozoa. Expressed throughout the brain with highest levels in regions of the cerebral cortex, hippocampus, diencephalon, pons, medulla and cerebellum.

It localises to the nucleus. The protein localises to the nucleolus. Functionally, transcriptional repressor. May play a role in early development as a Wnt/beta-catenin effector, hence controlling pluripotency and preimplantation development of embryonic stem cells. May promote adipogenesis in mesenchymal stem cells, possibly by inhibiting the expression of the antiadipogenic factor NR2F2. May inhibit osteoblastogenic differentiation. This chain is NK1 transcription factor-related protein 2 (Nkx1-2), found in Mus musculus (Mouse).